The chain runs to 490 residues: tRNA modification GTPase MnmE (490 aa).

(6S)-5-formyl-5,6,7,8-tetrahydrofolate-binding residues include R23, E80, and K133. Residues 229–412 enclose the TrmE-type G domain; it reads GIEVVIAGQP…LRRILLEVAG (184 aa). N239 serves as a coordination point for K(+). Residues 239-244, 258-264, and 283-286 each bind GTP; these read NAGKSS, TPVAGTT, and DTAG. S243 contributes to the Mg(2+) binding site. Residues T258, V260, and T263 each coordinate K(+). Position 264 (T264) interacts with Mg(2+). Over residues 366–382 the composition is skewed to low complexity; the sequence is PTAPTESAAVPPASARP. Residues 366 to 388 form a disordered region; it reads PTAPTESAAVPPASARPAPAPRP. Position 393 to 395 (393 to 395) interacts with GTP; the sequence is SAR. A (6S)-5-formyl-5,6,7,8-tetrahydrofolate-binding site is contributed by K490.

The protein belongs to the TRAFAC class TrmE-Era-EngA-EngB-Septin-like GTPase superfamily. TrmE GTPase family. As to quaternary structure, homodimer. Heterotetramer of two MnmE and two MnmG subunits. K(+) serves as cofactor.

Its subcellular location is the cytoplasm. Its function is as follows. Exhibits a very high intrinsic GTPase hydrolysis rate. Involved in the addition of a carboxymethylaminomethyl (cmnm) group at the wobble position (U34) of certain tRNAs, forming tRNA-cmnm(5)s(2)U34. The polypeptide is tRNA modification GTPase MnmE (Verminephrobacter eiseniae (strain EF01-2)).